The following is a 353-amino-acid chain: RNA 3'-terminal phosphate cyclase (353 aa).

Residues glutamine 100 and 285–289 (HAADQ) contribute to the ATP site. Histidine 311 (tele-AMP-histidine intermediate) is an active-site residue.

Belongs to the RNA 3'-terminal cyclase family. Type 1 subfamily.

It localises to the cytoplasm. The enzyme catalyses a 3'-end 3'-phospho-ribonucleotide-RNA + ATP = a 3'-end 2',3'-cyclophospho-ribonucleotide-RNA + AMP + diphosphate. Catalyzes the conversion of 3'-phosphate to a 2',3'-cyclic phosphodiester at the end of RNA. The mechanism of action of the enzyme occurs in 3 steps: (A) adenylation of the enzyme by ATP; (B) transfer of adenylate to an RNA-N3'P to produce RNA-N3'PP5'A; (C) and attack of the adjacent 2'-hydroxyl on the 3'-phosphorus in the diester linkage to produce the cyclic end product. The biological role of this enzyme is unknown but it is likely to function in some aspects of cellular RNA processing. The polypeptide is RNA 3'-terminal phosphate cyclase (Nitrosospira multiformis (strain ATCC 25196 / NCIMB 11849 / C 71)).